Here is a 393-residue protein sequence, read N- to C-terminus: Glucose-1-phosphate adenylyltransferase (393 aa).

Residues tyrosine 105, glycine 170, 185–186 (EK), and serine 196 contribute to the alpha-D-glucose 1-phosphate site.

This sequence belongs to the bacterial/plant glucose-1-phosphate adenylyltransferase family. Homotetramer.

It carries out the reaction alpha-D-glucose 1-phosphate + ATP + H(+) = ADP-alpha-D-glucose + diphosphate. It functions in the pathway glycan biosynthesis; glycogen biosynthesis. Functionally, involved in the biosynthesis of ADP-glucose, a building block required for the elongation reactions to produce glycogen. Catalyzes the reaction between ATP and alpha-D-glucose 1-phosphate (G1P) to produce pyrophosphate and ADP-Glc. The sequence is that of Glucose-1-phosphate adenylyltransferase from Clostridium perfringens (strain 13 / Type A).